The sequence spans 161 residues: Interleukin-17F (161 aa).

The N-terminal stretch at 1-28 is a signal peptide; sequence MKCTRETAMVKSLLLLMLGLAILREVAA. The N-linked (GlcNAc...) asparagine glycan is linked to Asn83. 2 disulfide bridges follow: Cys100/Cys150 and Cys105/Cys152.

It belongs to the IL-17 family. Homodimer; disulfide-linked. Heterodimer with IL17A (IL17A-IL17F). Forms complexes with IL17RA and IL17RC receptors with 2:1 binding stoichiometry: two receptor chains for one interleukin molecule. IL17F homodimer forms predominantly complexes with IL17RC homodimer, whereas IL17A-IL17F favors complexes with IL17RA-IL17RC. IL17RA and IL17RC chains cannot distinguish between IL17A and IL17F molecules, potentially enabling the formation of topologically distinct complexes. Expressed by T-helper 17 cells (Th17) (at protein level). The expression pattern reflects the differentiation state. In fully differentiated Th17 cells, IL17A-IL17F heterodimers are produced at higher levels than IL17A-IL17A and IL17F-IL17F dimers. Dominantly secreted in intestine. Expressed by resident cells of the lamina propria, both epithelial cells and immune cell subsets including natural killer cells, dendritic cells, macrophages and various T and B cell subsets. Expressed by epithelial cells and innate immune cells in the colon. Expressed in group 3 innate lymphoid cells.

It localises to the secreted. Effector cytokine of innate and adaptive immune system involved in antimicrobial host defense and maintenance of tissue integrity. IL17A-IL17F signals via IL17RA-IL17RC heterodimeric receptor complex, triggering homotypic interaction of IL17RA and IL17RC chains with TRAF3IP2 adapter through SEFIR domains. This leads to downstream TRAF6-mediated activation of NF-kappa-B and MAPkinase pathways ultimately resulting in transcriptional activation of cytokines, chemokines, antimicrobial peptides and matrix metalloproteinases, with potential strong immune inflammation. IL17A-IL17F is primarily involved in host defense against extracellular bacteria and fungi by inducing neutrophilic inflammation. As signature effector cytokine of T-helper 17 cells (Th17), primarily induces neutrophil activation and recruitment at infection and inflammatory sites. Stimulates the production of antimicrobial beta-defensins DEFB1, DEFB103A, and DEFB104A by mucosal epithelial cells, limiting the entry of microbes through the epithelial barriers. IL17F homodimer can signal via IL17RC homodimeric receptor complex, triggering downstream activation of TRAF6 and NF-kappa-B signaling pathway. Via IL17RC induces transcriptional activation of IL33, a potent cytokine that stimulates group 2 innate lymphoid cells and adaptive T-helper 2 cells involved in pulmonary allergic response to fungi. Likely via IL17RC, promotes sympathetic innervation of peripheral organs by coordinating the communication between gamma-delta T cells and parenchymal cells. Stimulates sympathetic innervation of thermogenic adipose tissue by driving TGFB1 expression. Regulates the composition of intestinal microbiota and immune tolerance by inducing antimicrobial proteins that specifically control the growth of commensal Firmicutes and Bacteroidetes. In Mus musculus (Mouse), this protein is Interleukin-17F (Il17f).